The primary structure comprises 62 residues: Venom protein 51.1 (62 aa).

An N-terminal signal peptide occupies residues 1 to 25; it reads MKFFGILLIVTMVVLVMIATTYVES. Disulfide bonds link Cys32/Cys53, Cys39/Cys58, and Cys43/Cys60.

As to expression, expressed by the venom gland.

Its subcellular location is the secreted. In terms of biological role, neurotoxin. Decreases the action potential of myelinated nerves in mice and frogs. This is Venom protein 51.1 from Lychas mucronatus (Chinese swimming scorpion).